The primary structure comprises 235 residues: (5-formylfuran-3-yl)methyl phosphate synthase (235 aa).

Lys-27 functions as the Schiff-base intermediate with substrate in the catalytic mechanism. The active-site Proton acceptor is the Lys-85.

The protein belongs to the MfnB family. In terms of assembly, homohexamer. Trimer of dimers.

It carries out the reaction 2 D-glyceraldehyde 3-phosphate = 4-(hydroxymethyl)-2-furancarboxaldehyde phosphate + phosphate + 2 H2O. Its pathway is cofactor biosynthesis; methanofuran biosynthesis. Its function is as follows. Catalyzes the formation of 4-(hydroxymethyl)-2-furancarboxaldehyde phosphate (4-HFC-P) from two molecules of glyceraldehyde-3-P (GA-3-P). This Methanocaldococcus jannaschii (strain ATCC 43067 / DSM 2661 / JAL-1 / JCM 10045 / NBRC 100440) (Methanococcus jannaschii) protein is (5-formylfuran-3-yl)methyl phosphate synthase.